An 802-amino-acid chain; its full sequence is Bifunctional purine biosynthetic protein ADE5,7 (802 aa).

Residues 1–450 (MLNILVLGNG…QNSESSKVAI (450 aa)) are GARS. Residues 114–330 (KRFMSKHNIP…LAQVFLAAAE (217 aa)) enclose the ATP-grasp domain. Residue 141–203 (QAHTDKAFVI…EQFLEGDEIS (63 aa)) participates in ATP binding. Residues glutamate 298 and asparagine 300 each coordinate Mg(2+). Residues 451–802 (TYADSGVSVD…CVIENGTKLY (352 aa)) form an AIRS region. Phosphoserine occurs at positions 455 and 458.

This sequence in the N-terminal section; belongs to the GARS family. It in the C-terminal section; belongs to the AIR synthase family. It depends on Mg(2+) as a cofactor. The cofactor is Mn(2+).

It localises to the cytoplasm. The catalysed reaction is 5-phospho-beta-D-ribosylamine + glycine + ATP = N(1)-(5-phospho-beta-D-ribosyl)glycinamide + ADP + phosphate + H(+). It carries out the reaction 2-formamido-N(1)-(5-O-phospho-beta-D-ribosyl)acetamidine + ATP = 5-amino-1-(5-phospho-beta-D-ribosyl)imidazole + ADP + phosphate + H(+). Its pathway is purine metabolism; IMP biosynthesis via de novo pathway; 5-amino-1-(5-phospho-D-ribosyl)imidazole from N(2)-formyl-N(1)-(5-phospho-D-ribosyl)glycinamide: step 2/2. It participates in purine metabolism; IMP biosynthesis via de novo pathway; N(1)-(5-phospho-D-ribosyl)glycinamide from 5-phospho-alpha-D-ribose 1-diphosphate: step 2/2. Functionally, catalyzes the second and fifth step in the 'de novo' purine biosynthesis pathway; contains phosphoribosylamine--glycine ligase (GARS) and phosphoribosylformylglycinamidine cyclo-ligase (AIRS) activities. This chain is Bifunctional purine biosynthetic protein ADE5,7, found in Saccharomyces cerevisiae (strain ATCC 204508 / S288c) (Baker's yeast).